Reading from the N-terminus, the 74-residue chain is Large ribosomal subunit protein bL31 (74 aa).

Zn(2+) is bound by residues Cys-16, Cys-18, Cys-38, and Cys-41.

Belongs to the bacterial ribosomal protein bL31 family. Type A subfamily. Part of the 50S ribosomal subunit. Zn(2+) is required as a cofactor.

Binds the 23S rRNA. This Acinetobacter baumannii (strain AB307-0294) protein is Large ribosomal subunit protein bL31.